Reading from the N-terminus, the 357-residue chain is Dihydroorotate dehydrogenase (quinone) (357 aa).

Residues 66–70 (AGFDK) and Thr90 contribute to the FMN site. Lys70 provides a ligand contact to substrate. 115-119 (NRMGF) contacts substrate. Positions 143 and 176 each coordinate FMN. Residue Asn176 coordinates substrate. Ser179 serves as the catalytic Nucleophile. A substrate-binding site is contributed by Asn181. The FMN site is built by Lys212 and Thr240. Position 241 to 242 (241 to 242 (NT)) interacts with substrate. Residues Gly264, Gly293, and 314–315 (YT) each bind FMN.

The protein belongs to the dihydroorotate dehydrogenase family. Type 2 subfamily. Monomer. The cofactor is FMN.

It is found in the cell membrane. The catalysed reaction is (S)-dihydroorotate + a quinone = orotate + a quinol. It functions in the pathway pyrimidine metabolism; UMP biosynthesis via de novo pathway; orotate from (S)-dihydroorotate (quinone route): step 1/1. Catalyzes the conversion of dihydroorotate to orotate with quinone as electron acceptor. This chain is Dihydroorotate dehydrogenase (quinone), found in Mycobacterium tuberculosis (strain ATCC 25177 / H37Ra).